The following is a 194-amino-acid chain: ATP-dependent Clp protease proteolytic subunit 3 (194 aa).

Catalysis depends on Ser-96, which acts as the Nucleophile. His-121 is an active-site residue.

Belongs to the peptidase S14 family. Fourteen ClpP subunits assemble into 2 heptameric rings which stack back to back to give a disk-like structure with a central cavity, resembling the structure of eukaryotic proteasomes.

It is found in the cytoplasm. It catalyses the reaction Hydrolysis of proteins to small peptides in the presence of ATP and magnesium. alpha-casein is the usual test substrate. In the absence of ATP, only oligopeptides shorter than five residues are hydrolyzed (such as succinyl-Leu-Tyr-|-NHMec, and Leu-Tyr-Leu-|-Tyr-Trp, in which cleavage of the -Tyr-|-Leu- and -Tyr-|-Trp bonds also occurs).. Functionally, cleaves peptides in various proteins in a process that requires ATP hydrolysis. Has a chymotrypsin-like activity. Plays a major role in the degradation of misfolded proteins. The polypeptide is ATP-dependent Clp protease proteolytic subunit 3 (Rhizobium johnstonii (strain DSM 114642 / LMG 32736 / 3841) (Rhizobium leguminosarum bv. viciae)).